A 265-amino-acid polypeptide reads, in one-letter code: MSEPHLLIDAGNSRIKWALADARRSLVDTGAFGHTRDGGADPDWSHLPRPRGAWISNVAGADVAARLDALLDARWPGLPRTTIRARPVQCGVTNGYTTPEQLGSDRWAGLIGAHAAFPGEHLLIATFGTATTLEALRADGRFTGGLIAPGWALMMRALGTHTAQLPTLTTDIASGLLAGAQAEPFQIDTPRSLSAGCLYAQAGLIERAWRDLVAAWQAPVRLVLAGGAADDVARALTVAHTRHDALILSGLALIAADAAPATAQD.

9 to 16 (DAGNSRIK) lines the ATP pocket. Residues tyrosine 96 and 103-106 (GSDR) each bind substrate. The active-site Proton acceptor is the aspartate 105. Residue threonine 129 coordinates ATP. Threonine 189 serves as a coordination point for substrate.

This sequence belongs to the type III pantothenate kinase family. Homodimer. NH4(+) serves as cofactor. It depends on K(+) as a cofactor.

The protein resides in the cytoplasm. The enzyme catalyses (R)-pantothenate + ATP = (R)-4'-phosphopantothenate + ADP + H(+). It participates in cofactor biosynthesis; coenzyme A biosynthesis; CoA from (R)-pantothenate: step 1/5. Catalyzes the phosphorylation of pantothenate (Pan), the first step in CoA biosynthesis. The polypeptide is Type III pantothenate kinase (Burkholderia orbicola (strain AU 1054)).